The chain runs to 171 residues: Large ribosomal subunit protein uL15 (171 aa).

Positions 1 to 10 (MKLNEISDNN) are enriched in polar residues. Disordered regions lie at residues 1 to 44 (MKLN…RSGV) and 150 to 171 (LPEAQPSEQEKKAARREANKAK). Residues 21–35 (RGIGSGKGKTAGRGQ) are compositionally biased toward gly residues. The segment covering 157–171 (EQEKKAARREANKAK) has biased composition (basic and acidic residues).

Belongs to the universal ribosomal protein uL15 family. As to quaternary structure, part of the 50S ribosomal subunit.

Binds to the 23S rRNA. This is Large ribosomal subunit protein uL15 from Novosphingobium aromaticivorans (strain ATCC 700278 / DSM 12444 / CCUG 56034 / CIP 105152 / NBRC 16084 / F199).